The sequence spans 565 residues: Heme/hemopexin transporter protein HuxB (565 aa).

An N-terminal signal peptide occupies residues 1–26; that stretch reads MKMRPRYSVIASAVSLGFVLSKSVMA. Residues 73–150 enclose the POTRA domain; that stretch reads FPLKQVQILD…GTVKILLLKG (78 aa).

It belongs to the TPS (TC 1.B.20) family.

Its subcellular location is the cell outer membrane. Its function is as follows. Likely functions in the release of soluble HxuA from the cell. Probable member of a two partner secretion pathway (TPS) in which it mediates the secretion of HuxA. The sequence is that of Heme/hemopexin transporter protein HuxB (hxuB) from Haemophilus influenzae (strain ATCC 51907 / DSM 11121 / KW20 / Rd).